The chain runs to 242 residues: Pyridoxine 5'-phosphate synthase (242 aa).

Asparagine 8 is a binding site for 3-amino-2-oxopropyl phosphate. A 1-deoxy-D-xylulose 5-phosphate-binding site is contributed by 10–11 (DH). Arginine 19 serves as a coordination point for 3-amino-2-oxopropyl phosphate. The active-site Proton acceptor is histidine 44. Positions 46 and 51 each coordinate 1-deoxy-D-xylulose 5-phosphate. Glutamate 71 (proton acceptor) is an active-site residue. Residue threonine 101 coordinates 1-deoxy-D-xylulose 5-phosphate. Catalysis depends on histidine 193, which acts as the Proton donor. 3-amino-2-oxopropyl phosphate is bound by residues glycine 194 and 215-216 (GF).

This sequence belongs to the PNP synthase family. As to quaternary structure, homooctamer; tetramer of dimers.

The protein resides in the cytoplasm. The enzyme catalyses 3-amino-2-oxopropyl phosphate + 1-deoxy-D-xylulose 5-phosphate = pyridoxine 5'-phosphate + phosphate + 2 H2O + H(+). It functions in the pathway cofactor biosynthesis; pyridoxine 5'-phosphate biosynthesis; pyridoxine 5'-phosphate from D-erythrose 4-phosphate: step 5/5. Its function is as follows. Catalyzes the complicated ring closure reaction between the two acyclic compounds 1-deoxy-D-xylulose-5-phosphate (DXP) and 3-amino-2-oxopropyl phosphate (1-amino-acetone-3-phosphate or AAP) to form pyridoxine 5'-phosphate (PNP) and inorganic phosphate. In Elusimicrobium minutum (strain Pei191), this protein is Pyridoxine 5'-phosphate synthase.